We begin with the raw amino-acid sequence, 268 residues long: Zinc transporter ZupT (268 aa).

The next 8 helical transmembrane spans lie at 5-25 (ILFA…GSLI), 36-56 (VLTI…MIEI), 75-95 (VVTV…DKLI), 124-144 (MGLF…LATF), 157-177 (IAVA…APIF), 187-207 (FILS…GYFL), 211-231 (FFSP…MVYI), and 248-268 (FAIG…LLFT). The Fe(2+) site is built by Asn-136 and Glu-139. Residues Glu-139 and His-164 each contribute to the Zn(2+) site. Fe(2+)-binding residues include Asn-165, Glu-168, and Glu-197. Glu-168 contacts Zn(2+).

It belongs to the ZIP transporter (TC 2.A.5) family. ZupT subfamily.

It is found in the cell membrane. The enzyme catalyses Zn(2+)(in) = Zn(2+)(out). Its function is as follows. Mediates zinc uptake. May also transport other divalent cations. The protein is Zinc transporter ZupT of Chlorobium chlorochromatii (strain CaD3).